Reading from the N-terminus, the 576-residue chain is MAGUK p55 subfamily member 7 (576 aa).

L27 domains lie at 10–64 (CDMG…EKQN) and 65–122 (PLPI…YDPV). Positions 139–220 (IIRLVKNSEP…AITFKIIPST (82 aa)) constitute a PDZ domain. In terms of domain architecture, SH3 spans 228-298 (EGKIFIKALF…PSKHFQERRL (71 aa)). The segment at 289 to 383 (PSKHFQERRL…VGPVGVGLNE (95 aa)) is phospho-regulated basic and hydrophobic (PRBH) motif. Positions 368–560 (YRLIVLVGPV…AFNELKTTFD (193 aa)) constitute a Guanylate kinase-like domain. Phosphoserine is present on S409.

It belongs to the MAGUK family. Heterodimer; able to heterodimerize via its C-terminal L27 domain with LIN7A, LIN7B and LIN7C. Forms a tripartite complex composed of DLG1, MPP7 and LIN7 (LIN7A or LIN7C). Interacts with DLG1 via its N-terminal L27 domain. Interacts with PALS1 and PATJ. Post-translationally, phosphorylated by aPKC which promotes dissociation from the cell cortex.

It localises to the membrane. The protein localises to the lateral cell membrane. Its subcellular location is the cell junction. The protein resides in the tight junction. It is found in the adherens junction. It localises to the cytoplasm. The protein localises to the cell cortex. Acts as an important adapter that promotes epithelial cell polarity and tight junction formation via its interaction with DLG1. Involved in the assembly of protein complexes at sites of cell-cell contact. The sequence is that of MAGUK p55 subfamily member 7 (Mpp7) from Mus musculus (Mouse).